The primary structure comprises 706 residues: DNA ligase (706 aa).

NAD(+) contacts are provided by residues Asp48–Asp52, Ser97–Leu98, and Glu131. Lys133 functions as the N6-AMP-lysine intermediate in the catalytic mechanism. Positions 154, 191, 307, and 331 each coordinate NAD(+). Zn(2+)-binding residues include Cys425, Cys428, Cys443, and Cys449. The BRCT domain occupies Arg628–Gly706.

The protein belongs to the NAD-dependent DNA ligase family. LigA subfamily. The cofactor is Mg(2+). Mn(2+) is required as a cofactor.

It carries out the reaction NAD(+) + (deoxyribonucleotide)n-3'-hydroxyl + 5'-phospho-(deoxyribonucleotide)m = (deoxyribonucleotide)n+m + AMP + beta-nicotinamide D-nucleotide.. In terms of biological role, DNA ligase that catalyzes the formation of phosphodiester linkages between 5'-phosphoryl and 3'-hydroxyl groups in double-stranded DNA using NAD as a coenzyme and as the energy source for the reaction. It is essential for DNA replication and repair of damaged DNA. The chain is DNA ligase from Afipia carboxidovorans (strain ATCC 49405 / DSM 1227 / KCTC 32145 / OM5) (Oligotropha carboxidovorans).